The following is a 397-amino-acid chain: ORC1-type DNA replication protein 1 (397 aa).

Residues threonine 67–alanine 71, tyrosine 208, and arginine 220 contribute to the ATP site.

The protein belongs to the CDC6/cdc18 family.

Involved in regulation of DNA replication. This Sulfolobus acidocaldarius (strain ATCC 33909 / DSM 639 / JCM 8929 / NBRC 15157 / NCIMB 11770) protein is ORC1-type DNA replication protein 1 (cdc6-1).